The sequence spans 312 residues: MAKTSMKKMLEAGVHFGHRSRFWSPKMGRFIYGTRNGVHIINLEKTLPLFNDALNFASKITAVGRSILFVGTKRAASNIIKQEAMRCGMPYVNHRWLGGMMTNYKTIKVSIKRLKDLEFLAEENFNQFGKKEALMMTREMEKLERSLGGIKDLNDIPDVIFVIDIGVEKNAVAEAKKLHLPIIGIVDTNHSPEGIDYVIPGNDDSIRAIGYYAREIANAILEAKAATSTSIEKKVSVKKLETKKPGSKKTPIEQVPAKEEIIKTSIKEDKPETLNKIALNTMKKADLIAYAETQGVTINSTDTKAQTIEKLA.

Belongs to the universal ribosomal protein uS2 family.

This is Small ribosomal subunit protein uS2 from Ruthia magnifica subsp. Calyptogena magnifica.